A 631-amino-acid chain; its full sequence is Tail sheath protein (631 aa).

This sequence belongs to the myoviridae tail sheath protein family. Homomultimer.

It is found in the virion. The protein resides in the host cytoplasm. Polymerizes as an extended structure around the baseplate-tail tube complex. During ejection, the sheath shifts to a contracted form, thereby making the inner tail tube protrude through the host cell envelope. The polypeptide is Tail sheath protein (Salmonella typhi).